Consider the following 446-residue polypeptide: ATP-dependent protease ATPase subunit HslU (446 aa).

ATP-binding positions include Ile18, 60-65 (GVGKTE), Asp259, Glu324, and Arg396.

It belongs to the ClpX chaperone family. HslU subfamily. A double ring-shaped homohexamer of HslV is capped on each side by a ring-shaped HslU homohexamer. The assembly of the HslU/HslV complex is dependent on binding of ATP.

The protein localises to the cytoplasm. Functionally, ATPase subunit of a proteasome-like degradation complex; this subunit has chaperone activity. The binding of ATP and its subsequent hydrolysis by HslU are essential for unfolding of protein substrates subsequently hydrolyzed by HslV. HslU recognizes the N-terminal part of its protein substrates and unfolds these before they are guided to HslV for hydrolysis. This is ATP-dependent protease ATPase subunit HslU from Vibrio atlanticus (strain LGP32) (Vibrio splendidus (strain Mel32)).